The primary structure comprises 466 residues: FAD-dependent monooxygenase dpfgE (466 aa).

The first 23 residues, 1 to 23, serve as a signal peptide directing secretion; it reads MSQKPFRVIIVGGSVTGLTLAHS. The FAD site is built by Glu-35, Gly-49, and Arg-108. Asn-128 and Asn-192 each carry an N-linked (GlcNAc...) asparagine glycan. 2 residues coordinate FAD: Asp-312 and Ala-325. N-linked (GlcNAc...) asparagine glycosylation occurs at Asn-376. A helical membrane pass occupies residues 443 to 465; the sequence is GVVRNVFFLLAATVIVAWVCRLW.

It belongs to the paxM FAD-dependent monooxygenase family. It depends on FAD as a cofactor.

The protein localises to the membrane. The protein operates within secondary metabolite biosynthesis; terpenoid biosynthesis. FAD-dependent monooxygenase; part of the gene cluster that mediates the biosynthesis of diterpenoid pyrones. The first step of the pathway is the synthesis of the alpha-pyrone moiety by the polyketide synthase dpfgA via condensation of one acetyl-CoA starter unit with 3 malonyl-CoA units and 2 methylations. The alpha-pyrone is then combined with geranylgeranyl pyrophosphate (GGPP) formed by the GGPP synthase dpfgD through the action of the prenyltransferase dpfgC to yield a linear alpha-pyrone diterpenoid. Subsequent steps in the diterpenoid pyrone biosynthetic pathway involve the decalin core formation, which is initiated by the epoxidation of the C10-C11 olefin by the FAD-dependent oxidoreductase dpfgE, and is followed by a cyclization cascade catalyzed by the terpene cyclase dpfgB. The short chain dehydrogenase/reductase dpfgG then oxidizes the 8S hydroxy group to a ketone and the short chain dehydrogenase/reductase dpfgH reduces the ketone to the 8R hydroxy group to yield higginsianin B. Higginsianin B is further methylated by the methyltransferase dpfgI to produce the intermediate named FDDP B. The cytochrome P450 monooxygenase dfgpJ then catalyzes a three-step oxidation at C-27 to generate a carboxylic acid as well as C-26 hydroxylation. Finally, methyltransferase dpfgK methylates the carboxylic acid generated by dpfgJ, yielding the final diterpenoid pyrones from the pathway which were named FDDP D and FDDP E. This Gibberella zeae (strain ATCC MYA-4620 / CBS 123657 / FGSC 9075 / NRRL 31084 / PH-1) (Wheat head blight fungus) protein is FAD-dependent monooxygenase dpfgE.